We begin with the raw amino-acid sequence, 178 residues long: Ribosome maturation factor RimP (178 aa).

It belongs to the RimP family.

The protein resides in the cytoplasm. Required for maturation of 30S ribosomal subunits. In Mycolicibacterium gilvum (strain PYR-GCK) (Mycobacterium gilvum (strain PYR-GCK)), this protein is Ribosome maturation factor RimP.